We begin with the raw amino-acid sequence, 272 residues long: D-aminoacyl-tRNA deacylase (272 aa).

The protein belongs to the DtdA deacylase family. In terms of assembly, monomer. Requires Zn(2+) as cofactor.

It carries out the reaction a D-aminoacyl-tRNA + H2O = a tRNA + a D-alpha-amino acid + H(+). The enzyme catalyses glycyl-tRNA(Ala) + H2O = tRNA(Ala) + glycine + H(+). Its function is as follows. D-aminoacyl-tRNA deacylase with broad substrate specificity. By recycling D-aminoacyl-tRNA to D-amino acids and free tRNA molecules, this enzyme counteracts the toxicity associated with the formation of D-aminoacyl-tRNA entities in vivo. This is D-aminoacyl-tRNA deacylase from Thermococcus onnurineus (strain NA1).